A 493-amino-acid polypeptide reads, in one-letter code: Proline--tRNA ligase (493 aa).

Belongs to the class-II aminoacyl-tRNA synthetase family. ProS type 3 subfamily. Homodimer.

It localises to the cytoplasm. It catalyses the reaction tRNA(Pro) + L-proline + ATP = L-prolyl-tRNA(Pro) + AMP + diphosphate. Its function is as follows. Catalyzes the attachment of proline to tRNA(Pro) in a two-step reaction: proline is first activated by ATP to form Pro-AMP and then transferred to the acceptor end of tRNA(Pro). The protein is Proline--tRNA ligase of Porphyromonas gingivalis (strain ATCC BAA-308 / W83).